An 825-amino-acid chain; its full sequence is Translation initiation factor IF-2 (825 aa).

Basic and acidic residues-rich tracts occupy residues 1-19 (MTKK…DNKK), 35-45 (RKGEKKTEGKR), 70-98 (LLKD…EYKK), and 113-122 (KKVESVEKPA). The segment at 1–239 (MTKKQENETS…TQRKDRPLPE (239 aa)) is disordered. Low complexity predominate over residues 158–169 (PSSSRRPSSRPS). Residues 181 to 191 (GRRRKSGKPGR) show a composition bias toward basic residues. Residues 194–208 (QNSYADQGRGANSNR) show a composition bias toward polar residues. Residues 211-220 (QRKRKNKKHQ) show a composition bias toward basic residues. In terms of domain architecture, tr-type G spans 326–495 (VRPPVVTIMG…ILEADMLELK (170 aa)). Positions 335–342 (GHVDHGKT) are G1. 335–342 (GHVDHGKT) lines the GTP pocket. The G2 stretch occupies residues 360 to 364 (GITQN). The interval 381–384 (DTPG) is G3. Residues 381–385 (DTPGH) and 435–438 (NKMD) each bind GTP. The segment at 435 to 438 (NKMD) is G4. The tract at residues 471–473 (SAK) is G5.

It belongs to the TRAFAC class translation factor GTPase superfamily. Classic translation factor GTPase family. IF-2 subfamily.

It localises to the cytoplasm. One of the essential components for the initiation of protein synthesis. Protects formylmethionyl-tRNA from spontaneous hydrolysis and promotes its binding to the 30S ribosomal subunits. Also involved in the hydrolysis of GTP during the formation of the 70S ribosomal complex. The polypeptide is Translation initiation factor IF-2 (Lactobacillus delbrueckii subsp. bulgaricus (strain ATCC BAA-365 / Lb-18)).